The following is a 314-amino-acid chain: 4-hydroxy-3-methylbut-2-enyl diphosphate reductase (314 aa).

Cys12 is a [4Fe-4S] cluster binding site. (2E)-4-hydroxy-3-methylbut-2-enyl diphosphate is bound by residues His41 and His74. 2 residues coordinate dimethylallyl diphosphate: His41 and His74. Isopentenyl diphosphate-binding residues include His41 and His74. Cys96 lines the [4Fe-4S] cluster pocket. His124 is a (2E)-4-hydroxy-3-methylbut-2-enyl diphosphate binding site. His124 serves as a coordination point for dimethylallyl diphosphate. His124 contributes to the isopentenyl diphosphate binding site. Glu126 functions as the Proton donor in the catalytic mechanism. Position 167 (Thr167) interacts with (2E)-4-hydroxy-3-methylbut-2-enyl diphosphate. A [4Fe-4S] cluster-binding site is contributed by Cys197. (2E)-4-hydroxy-3-methylbut-2-enyl diphosphate-binding residues include Ser225, Ser226, Asn227, and Ser269. Dimethylallyl diphosphate contacts are provided by Ser225, Ser226, Asn227, and Ser269. Residues Ser225, Ser226, Asn227, and Ser269 each coordinate isopentenyl diphosphate.

This sequence belongs to the IspH family. It depends on [4Fe-4S] cluster as a cofactor.

The catalysed reaction is isopentenyl diphosphate + 2 oxidized [2Fe-2S]-[ferredoxin] + H2O = (2E)-4-hydroxy-3-methylbut-2-enyl diphosphate + 2 reduced [2Fe-2S]-[ferredoxin] + 2 H(+). It carries out the reaction dimethylallyl diphosphate + 2 oxidized [2Fe-2S]-[ferredoxin] + H2O = (2E)-4-hydroxy-3-methylbut-2-enyl diphosphate + 2 reduced [2Fe-2S]-[ferredoxin] + 2 H(+). Its pathway is isoprenoid biosynthesis; dimethylallyl diphosphate biosynthesis; dimethylallyl diphosphate from (2E)-4-hydroxy-3-methylbutenyl diphosphate: step 1/1. It participates in isoprenoid biosynthesis; isopentenyl diphosphate biosynthesis via DXP pathway; isopentenyl diphosphate from 1-deoxy-D-xylulose 5-phosphate: step 6/6. Functionally, catalyzes the conversion of 1-hydroxy-2-methyl-2-(E)-butenyl 4-diphosphate (HMBPP) into a mixture of isopentenyl diphosphate (IPP) and dimethylallyl diphosphate (DMAPP). Acts in the terminal step of the DOXP/MEP pathway for isoprenoid precursor biosynthesis. The chain is 4-hydroxy-3-methylbut-2-enyl diphosphate reductase from Haemophilus influenzae (strain ATCC 51907 / DSM 11121 / KW20 / Rd).